Here is a 282-residue protein sequence, read N- to C-terminus: Bis(5'-nucleosyl)-tetraphosphatase, symmetrical (282 aa).

This sequence belongs to the Ap4A hydrolase family.

It catalyses the reaction P(1),P(4)-bis(5'-adenosyl) tetraphosphate + H2O = 2 ADP + 2 H(+). In terms of biological role, hydrolyzes diadenosine 5',5'''-P1,P4-tetraphosphate to yield ADP. The polypeptide is Bis(5'-nucleosyl)-tetraphosphatase, symmetrical (Escherichia coli O45:K1 (strain S88 / ExPEC)).